We begin with the raw amino-acid sequence, 660 residues long: Arginine--tRNA ligase, cytoplasmic (660 aa).

Met1 carries the N-acetylmethionine modification. A could be involved in the assembly of the multisynthetase complex region spans residues 1-72 (MDVLVSECSA…QAERNKPTKN (72 aa)). L-arginine-binding positions include 200–202 (SPN), His211, Tyr384, Asp388, and Gln412. Positions 201–212 (PNIAKEMHVGHL) match the 'HIGH' region motif. The interval 529 to 543 (NTAAYLLYAFTRIRS) is interaction with tRNA.

It belongs to the class-I aminoacyl-tRNA synthetase family. As to quaternary structure, interacts (via N-terminus) with AIMP1 (via N-terminus); this stimulates its catalytic activity. Interacts (via N-terminus) with LARS2 (via C-terminus). Monomer. Part of a multisubunit complex that groups tRNA ligases for Arg (RARS1), Asp (DARS1), Gln (QARS1), Ile (IARS1), Leu (LARS1), Lys (KARS1), Met (MARS1) the bifunctional ligase for Glu and Pro (EPRS1) and the auxiliary subunits AIMP1/p43, AIMP2/p38 and EEF1E1/p18. Interacts with QARS1. Part of a complex composed of RARS1, QARS1 and AIMP1.

It localises to the cytoplasm. Its subcellular location is the cytosol. It catalyses the reaction tRNA(Arg) + L-arginine + ATP = L-arginyl-tRNA(Arg) + AMP + diphosphate. Forms part of a macromolecular complex that catalyzes the attachment of specific amino acids to cognate tRNAs during protein synthesis. Modulates the secretion of AIMP1 and may be involved in generation of the inflammatory cytokine EMAP2 from AIMP1. This chain is Arginine--tRNA ligase, cytoplasmic, found in Homo sapiens (Human).